The chain runs to 67 residues: Large ribosomal subunit protein bL32 (67 aa).

A compositionally biased stretch (basic residues) spans 1 to 19; sequence MAVPKRKMSRANTRARRAQ. The interval 1 to 20 is disordered; that stretch reads MAVPKRKMSRANTRARRAQW.

It belongs to the bacterial ribosomal protein bL32 family.

This chain is Large ribosomal subunit protein bL32, found in Paenarthrobacter aurescens (strain TC1).